The primary structure comprises 91 residues: Alpha-defensin-related sequence 10 (91 aa).

Positions 1–19 (MKKLVLLSAFVLLAFQVQA) are cleaved as a signal peptide. A propeptide spanning residues 20–65 (DSIQNTDEETKTEEQPGEENQAMSVSFGDPEGSALQDAAVGMARPC) is cleaved from the precursor. Positions 21 to 52 (SIQNTDEETKTEEQPGEENQAMSVSFGDPEGS) are disordered. Repeat copies occupy residues 65-67 (CPP), 68-70 (CPS), 71-73 (CPS), 74-76 (CPW), 77-79 (CPM), 80-82 (CPR), and 83-85 (CPS). The 7 X 3 AA tandem repeats of C-P-X stretch occupies residues 65–85 (CPPCPSCPSCPWCPMCPRCPS).

It belongs to the alpha-defensin family. As to expression, paneth cells of the small bowel.

Its subcellular location is the secreted. In terms of biological role, apparent precursor of a secreted, cationic, proline- and cysteine-rich peptide that contains Cys-Pro-Xaa repeats. Unlike cryptdin, the proposed mature peptide region lacks the structural motif characteristic of defensins. It may have microbicidal activities. This chain is Alpha-defensin-related sequence 10 (Defa-rs10), found in Mus musculus (Mouse).